The following is a 76-amino-acid chain: U-scoloptoxin(15)-Ssd3b (76 aa).

Positions 1–23 (MEKKIIFLCFLVALLTFPEFISS) are cleaved as a signal peptide.

Contains 2 disulfide bonds. In terms of tissue distribution, expressed by the venom gland.

It is found in the secreted. The sequence is that of U-scoloptoxin(15)-Ssd3b from Scolopendra dehaani (Thai centipede).